The sequence spans 355 residues: MVADAYGRPLKDLRIAVTPECNLDCFFCHMEGATESGPMRPGSWSPVLSVEDYDIIGEAASRLGVDSFKLTGGEPLIRGDVDKIVAVLARYGEVSMTTNGILLPLKASSLKRAGLARVNVSLHSISEEVYEKITRRRAVKLALKGVEAALKAGLRVKVNMVLLRGLNEGEFWRLLRLAEDLGFDLQVIEVHPAGRGRKVLSSFRRPIDVVEERLSSMAVAVETGRLHNRRVYRLPSGVRVYLVDPVENPVFCMGCYRVRLTWDGRLLPCIYWKGPYPSVAEALKRGGSREEKVWRVMKILLEANALRRPTYLFRLHDGQEPQAPSTGRGLRLTLPGKAKAERLAYSTLKAPLIEG.

In terms of domain architecture, Radical SAM core spans 5-233; sequence AYGRPLKDLR…GRLHNRRVYR (229 aa). GTP is bound at residue R14. Residues C21, C25, and C28 each coordinate [4Fe-4S] cluster. K69 contributes to the GTP binding site. G73 is a binding site for S-adenosyl-L-methionine. T97 provides a ligand contact to GTP. S121 is an S-adenosyl-L-methionine binding site. Residue K157 participates in GTP binding. Residues C252 and C255 each contribute to the [4Fe-4S] cluster site. A GTP-binding site is contributed by 257–259; it reads RVR. C269 is a binding site for [4Fe-4S] cluster.

Belongs to the radical SAM superfamily. MoaA family. [4Fe-4S] cluster is required as a cofactor.

It carries out the reaction GTP + AH2 + S-adenosyl-L-methionine = (8S)-3',8-cyclo-7,8-dihydroguanosine 5'-triphosphate + 5'-deoxyadenosine + L-methionine + A + H(+). It participates in cofactor biosynthesis; molybdopterin biosynthesis. Its function is as follows. Catalyzes the cyclization of GTP to (8S)-3',8-cyclo-7,8-dihydroguanosine 5'-triphosphate. The chain is Probable GTP 3',8-cyclase from Aeropyrum pernix (strain ATCC 700893 / DSM 11879 / JCM 9820 / NBRC 100138 / K1).